A 215-amino-acid polypeptide reads, in one-letter code: C' protein (215 aa).

A disordered region spans residues 12-34 (MPSFLKKILKLRGRRQEDESRSR). Residues 15-22 (FLKKILKL) form an involved in self-degradation and in host STAT1 degradation region.

This sequence belongs to the respirovirus protein C family. The different isoforms interact (via C-terminus) with unphosphorylated and phosphorylated human STAT1 (via N-terminus), favoring the formation of parallel STAT1 homodimers. The different isoforms do not interact with host STAT2. C protein interacts with L protein; this interaction has an inhibitory effect on viral transcription and replication. Y1 and Y2 proteins are produced not only by alternative initiation, but also by proteolytic cleavage of C'. Only alternative initiation is detected in vitro, whereas in vivo cleavage seems to be predominant.

The protein localises to the host cytoplasm. It is found in the virion. The different isoforms prevent the establishment of cellular antiviral state by blocking the interferon-alpha/beta (IFN-alpha/beta) and IFN-gamma signaling pathways. They inhibit IFN-alpha/beta induced tyrosine phosphorylation of STAT1 and STAT2. Blocking the IFN-alpha/beta pathway requires binding to STAT1 in the cytoplasm. They inhibit IFN-gamma induced serine phosphorylation of STAT1. Block the IFN-gamma pathway by binding to and stabilizing the parallel form of the STAT1 dimer, further inducing high-molecular-weight complex (HMWC) formation and inhibition of transcription by IFN-gamma. May also have a role in preventing the cell to enter apoptosis. Modulate regulation of viral transcription and replication. Overexpression inhibits the viral RNA polymerase. The absence of all C', C, Y1 and Y2 proteins leads to viral delayed growth. Plays an important role in virion particles release. Modulates virion shape. The sequence is that of C' protein (P/V/C) from Sendai virus (strain Z) (SeV).